Reading from the N-terminus, the 329-residue chain is G-protein coupled bile acid receptor 1 (329 aa).

Topologically, residues 1 to 18 are extracellular; the sequence is MMSHNTTELSAIPRGVQE. Asn5 is a glycosylation site (N-linked (GlcNAc...) asparagine). The chain crosses the membrane as a helical span at residues 19–39; sequence LSLVLASLIVIANLLLALGIV. Topologically, residues 40-49 are cytoplasmic; the sequence is LDRHLRSPPA. A helical membrane pass occupies residues 50 to 70; that stretch reads GCFFLSLLLAGLLTGLALPTL. Residues 71–84 lie on the Extracellular side of the membrane; the sequence is PGLWNRSHQGYWSC. The N-linked (GlcNAc...) asparagine glycan is linked to Asn75. Cys84 and Cys154 form a disulfide bridge. Residues 85 to 105 form a helical membrane-spanning segment; it reads LLLHLAPNFCFLSLLANLLLV. Residues 106 to 124 lie on the Cytoplasmic side of the membrane; that stretch reads HGERYMAVLQPLRPHGSVR. Residues 125-145 form a helical membrane-spanning segment; the sequence is LALFLTWISSLLFASLPALGW. At 146 to 157 the chain is on the extracellular side; sequence NHWSPGANCSSQ. Residue Asn153 is glycosylated (N-linked (GlcNAc...) asparagine). A helical transmembrane segment spans residues 158–178; that stretch reads AIFPAPYLYLEVYGLLLPAVG. The Cytoplasmic segment spans residues 179–229; it reads ATALLSVRVLATAHHQLREIRRLERAVCRDAPSTLARALTWRQARAQAGAT. A helical membrane pass occupies residues 230-250; it reads LLFLLCWGPYVATLLLSVLAY. At 251–260 the chain is on the extracellular side; it reads ERRPPLGPVT. A helical membrane pass occupies residues 261 to 281; it reads LLSLISLGSASAAVVPVAMGL. The Cytoplasmic portion of the chain corresponds to 282–329; that stretch reads GDQRYTAPWRTAAQRWLQVLRGRPKRANPGPSTAYHSSSQCSTDLDLN. Residues 306–329 are disordered; that stretch reads KRANPGPSTAYHSSSQCSTDLDLN. Positions 311-329 are enriched in polar residues; sequence GPSTAYHSSSQCSTDLDLN.

This sequence belongs to the G-protein coupled receptor 1 family.

The protein localises to the cell membrane. Receptor for bile acid. Bile acid-binding induces its internalization, activation of extracellular signal-regulated kinase and intracellular cAMP production. May be involved in the suppression of macrophage functions by bile acids. Involved in bile acid promoted GLP1R secretion. The chain is G-protein coupled bile acid receptor 1 (Gpbar1) from Rattus norvegicus (Rat).